We begin with the raw amino-acid sequence, 299 residues long: ATP phosphoribosyltransferase (299 aa).

The protein belongs to the ATP phosphoribosyltransferase family. Long subfamily. In terms of assembly, equilibrium between an active dimeric form, an inactive hexameric form and higher aggregates. Interconversion between the various forms is largely reversible and is influenced by the natural substrates and inhibitors of the enzyme. Mg(2+) serves as cofactor.

Its subcellular location is the cytoplasm. The enzyme catalyses 1-(5-phospho-beta-D-ribosyl)-ATP + diphosphate = 5-phospho-alpha-D-ribose 1-diphosphate + ATP. It functions in the pathway amino-acid biosynthesis; L-histidine biosynthesis; L-histidine from 5-phospho-alpha-D-ribose 1-diphosphate: step 1/9. Feedback inhibited by histidine. Functionally, catalyzes the condensation of ATP and 5-phosphoribose 1-diphosphate to form N'-(5'-phosphoribosyl)-ATP (PR-ATP). Has a crucial role in the pathway because the rate of histidine biosynthesis seems to be controlled primarily by regulation of HisG enzymatic activity. This is ATP phosphoribosyltransferase from Buchnera aphidicola subsp. Diuraphis noxia.